Consider the following 282-residue polypeptide: Pantothenate synthetase (282 aa).

31–38 serves as a coordination point for ATP; that stretch reads MGYLHEGH. The active-site Proton donor is the H38. Q62 is a binding site for (R)-pantoate. Q62 contacts beta-alanine. 148–151 serves as a coordination point for ATP; it reads GEKD. (R)-pantoate is bound at residue Q154. ATP contacts are provided by residues V177 and 185-188; that span reads YSSR.

Belongs to the pantothenate synthetase family. Homodimer.

The protein resides in the cytoplasm. The enzyme catalyses (R)-pantoate + beta-alanine + ATP = (R)-pantothenate + AMP + diphosphate + H(+). The protein operates within cofactor biosynthesis; (R)-pantothenate biosynthesis; (R)-pantothenate from (R)-pantoate and beta-alanine: step 1/1. Functionally, catalyzes the condensation of pantoate with beta-alanine in an ATP-dependent reaction via a pantoyl-adenylate intermediate. This Aquifex aeolicus (strain VF5) protein is Pantothenate synthetase.